Consider the following 873-residue polypeptide: Leucine--tRNA ligase (873 aa).

Positions 41–51 (PYPSGRIHMGH) match the 'HIGH' region motif. Positions 645 to 649 (KMSKS) match the 'KMSKS' region motif. Lysine 648 contacts ATP.

This sequence belongs to the class-I aminoacyl-tRNA synthetase family.

Its subcellular location is the cytoplasm. It catalyses the reaction tRNA(Leu) + L-leucine + ATP = L-leucyl-tRNA(Leu) + AMP + diphosphate. This is Leucine--tRNA ligase from Cereibacter sphaeroides (strain ATCC 17025 / ATH 2.4.3) (Rhodobacter sphaeroides).